The following is a 117-amino-acid chain: Large ribosomal subunit protein uL22 (117 aa).

Belongs to the universal ribosomal protein uL22 family. In terms of assembly, part of the 50S ribosomal subunit.

In terms of biological role, this protein binds specifically to 23S rRNA; its binding is stimulated by other ribosomal proteins, e.g. L4, L17, and L20. It is important during the early stages of 50S assembly. It makes multiple contacts with different domains of the 23S rRNA in the assembled 50S subunit and ribosome. The globular domain of the protein is located near the polypeptide exit tunnel on the outside of the subunit, while an extended beta-hairpin is found that lines the wall of the exit tunnel in the center of the 70S ribosome. This is Large ribosomal subunit protein uL22 from Staphylococcus aureus (strain USA300).